We begin with the raw amino-acid sequence, 747 residues long: Eukaryotic translation initiation factor 3 subunit B (747 aa).

In terms of domain architecture, RRM spans 42-128 (AFVVVDGLPE…HTLRVNKLTD (87 aa)). 5 WD repeats span residues 195–234 (DRQH…RQRR), 236–292 (AHPF…PLRS), 310–349 (APKF…LLDK), 520–563 (LEKK…EKPE), and 578–623 (ADHY…LREE).

This sequence belongs to the eIF-3 subunit B family. Component of the eukaryotic translation initiation factor 3 (eIF-3) complex.

The protein localises to the cytoplasm. In terms of biological role, RNA-binding component of the eukaryotic translation initiation factor 3 (eIF-3) complex, which is involved in protein synthesis of a specialized repertoire of mRNAs and, together with other initiation factors, stimulates binding of mRNA and methionyl-tRNAi to the 40S ribosome. The eIF-3 complex specifically targets and initiates translation of a subset of mRNAs involved in cell proliferation. This is Eukaryotic translation initiation factor 3 subunit B (prt-1) from Neurospora crassa (strain ATCC 24698 / 74-OR23-1A / CBS 708.71 / DSM 1257 / FGSC 987).